The primary structure comprises 377 residues: WAT1-related protein At5g13670 (377 aa).

The next 10 membrane-spanning stretches (helical) occupy residues 9 to 29, 38 to 58, 64 to 84, 99 to 119, 136 to 156, 187 to 207, 214 to 234, 251 to 271, 279 to 299, and 303 to 323; these read FIAI…AKLA, VLVA…ALIL, PKLT…EPVV, TFTS…ACVF, VGTM…GNVI, IMLV…AKIL, LSLT…MGLI, LLAS…IGWA, FVSA…TFVF, and VYVG…LVLW. 2 consecutive EamA domains span residues 18-149 and 194-322; these read LYAL…MLMT and FSWS…YLVL.

It belongs to the drug/metabolite transporter (DMT) superfamily. Plant drug/metabolite exporter (P-DME) (TC 2.A.7.4) family.

Its subcellular location is the membrane. The sequence is that of WAT1-related protein At5g13670 from Arabidopsis thaliana (Mouse-ear cress).